The chain runs to 155 residues: Isotocin-neurophysin IT 1 (155 aa).

Positions 1-19 are cleaved as a signal peptide; that stretch reads MTGTAISVCLLFLLSVCSA. Residues Cys-20 and Cys-25 are joined by a disulfide bond. A Glycine amide modification is found at Gly-28. 7 disulfides stabilise this stretch: Cys-41-Cys-85, Cys-44-Cys-58, Cys-52-Cys-75, Cys-59-Cys-65, Cys-92-Cys-105, Cys-99-Cys-117, and Cys-106-Cys-111.

It belongs to the vasopressin/oxytocin family. Post-translationally, seven disulfide bonds are present in neurophysin.

Its function is as follows. Isotocin causes contraction of smooth muscles. The polypeptide is Isotocin-neurophysin IT 1 (Takifugu rubripes (Japanese pufferfish)).